We begin with the raw amino-acid sequence, 416 residues long: NADH-quinone oxidoreductase subunit H (416 aa).

A run of 9 helical transmembrane segments spans residues 16–36, 84–104, 124–144, 165–185, 197–217, 260–280, 288–308, 320–340, and 353–373; these read LILAKAVGVFVFLVLTVLAAI, PVYLLAPVISVIPAFLAFAVI, LAVAVLYILAVTSVGVYGIVL, VVSYEIAMALSFATVFLYAGT, STWYVFLLLPSFLVYVTSMVG, VSALATTMFLGGWHAPWPISL, WWPLLWFTAKVWVFLFVYIWL, FMAIGWKMLIPVSLAWIMIVA, and WASGLLIAGTVLTFGLAVILW.

Belongs to the complex I subunit 1 family. NDH-1 is composed of 14 different subunits. Subunits NuoA, H, J, K, L, M, N constitute the membrane sector of the complex.

It localises to the cell membrane. The enzyme catalyses a quinone + NADH + 5 H(+)(in) = a quinol + NAD(+) + 4 H(+)(out). NDH-1 shuttles electrons from NADH, via FMN and iron-sulfur (Fe-S) centers, to quinones in the respiratory chain. The immediate electron acceptor for the enzyme in this species is believed to be menaquinone. Couples the redox reaction to proton translocation (for every two electrons transferred, four hydrogen ions are translocated across the cytoplasmic membrane), and thus conserves the redox energy in a proton gradient. This subunit may bind ubiquinone. The sequence is that of NADH-quinone oxidoreductase subunit H from Mycobacterium sp. (strain KMS).